The primary structure comprises 1030 residues: E3 ubiquitin-protein ligase mib1 (1030 aa).

One can recognise an MIB/HERC2 1 domain in the interval 6 to 74 (NNRVMMEGVG…AYDVRILDSA (69 aa)). Residues 80-132 (HDGTMCDTCRQQPIIGIRWKCAECTNYDLCTTCYHGDKHHLRHRFYRITTPGS) form a ZZ-type zinc finger. 8 residues coordinate Zn(2+): cysteine 85, cysteine 88, cysteine 100, cysteine 103, cysteine 109, cysteine 112, histidine 118, and histidine 122. Residues 143 to 221 (SKKITARGIF…MSDLKCVQDA (79 aa)) form the MIB/HERC2 2 domain. 9 ANK repeats span residues 430–460 (DINE…DVNG), 463–492 (AGHT…DLEA), 496–525 (DGDR…DLNA), 529–558 (RRQT…HPSL), 562–591 (EGDT…DVTI), 595–627 (NGFN…IVDE), 631–661 (DGYT…NLDV), 665–694 (NQQT…KLDV), and 698–727 (DGDT…VSKV). 2 consecutive RING-type zinc fingers follow at residues 817-852 (CMVC…LICK) and 864-899 (CVVC…VQCR). Residues 957-986 (ALQRDKDNTNVNADVQKLQQQLQDIKEQTM) are a coiled coil. Residues 987-1020 (CPVCLDRLKNMIFMCGHGTCQLCGDRMSECPICR) form an RING-type 3 zinc finger.

Interacts with deltaA (dla) and deltaD (dld).

It localises to the cytoplasm. Its subcellular location is the cytoskeleton. The protein resides in the microtubule organizing center. The protein localises to the centrosome. It is found in the centriolar satellite. It localises to the cell membrane. The enzyme catalyses S-ubiquitinyl-[E2 ubiquitin-conjugating enzyme]-L-cysteine + [acceptor protein]-L-lysine = [E2 ubiquitin-conjugating enzyme]-L-cysteine + N(6)-ubiquitinyl-[acceptor protein]-L-lysine.. It functions in the pathway protein modification; protein ubiquitination. Functionally, E3 ubiquitin-protein ligase that mediates ubiquitination of Delta receptors, which act as ligands of Notch proteins. Positively regulates the Delta-mediated Notch signaling by ubiquitinating the intracellular domain of Delta, leading to endocytosis of Delta receptors. It thereby participates in many processes regulated by the Notch signaling pathway, such as midline cell fate specification prior to germ layer formation, patterning of sensory cell differentiation in the ear, neurogenesis of the hindbrain and commitment to a secretory fate in the intestine. Essential for early embryonic development. This Danio rerio (Zebrafish) protein is E3 ubiquitin-protein ligase mib1 (mib1).